The sequence spans 442 residues: Protein translocase subunit SecY (442 aa).

The next 10 membrane-spanning stretches (helical) occupy residues 24–44 (FLFL…PGIN), 76–96 (IFAL…LMTA), 125–145 (VLAL…GVAF), 149–169 (FGFY…MMWL), 178–198 (VGNG…PRAI), 212–232 (IFAL…VVFI), 269–289 (VIPA…GSWF), 312–332 (NILL…ALMF), 363–383 (GVLT…CLLP), and 385–405 (FLVV…LIVV).

The protein belongs to the SecY/SEC61-alpha family. As to quaternary structure, component of the Sec protein translocase complex. Heterotrimer consisting of SecY, SecE and SecG subunits. The heterotrimers can form oligomers, although 1 heterotrimer is thought to be able to translocate proteins. Interacts with the ribosome. Interacts with SecDF, and other proteins may be involved. Interacts with SecA.

It localises to the cell inner membrane. Its function is as follows. The central subunit of the protein translocation channel SecYEG. Consists of two halves formed by TMs 1-5 and 6-10. These two domains form a lateral gate at the front which open onto the bilayer between TMs 2 and 7, and are clamped together by SecE at the back. The channel is closed by both a pore ring composed of hydrophobic SecY resides and a short helix (helix 2A) on the extracellular side of the membrane which forms a plug. The plug probably moves laterally to allow the channel to open. The ring and the pore may move independently. This is Protein translocase subunit SecY from Pseudomonas aeruginosa (strain ATCC 15692 / DSM 22644 / CIP 104116 / JCM 14847 / LMG 12228 / 1C / PRS 101 / PAO1).